Here is a 717-residue protein sequence, read N- to C-terminus: ATP-dependent zinc metalloprotease FtsH (717 aa).

Over 1–7 (MFKDKKM) the chain is Cytoplasmic. The helical transmembrane segment at 8 to 28 (LKYIVIYSIIAFGILLTFNMV) threads the bilayer. The Extracellular segment spans residues 29-109 (KDEMLYEKVD…VEFNVTKPEN (81 aa)). A helical transmembrane segment spans residues 110-130 (YQLLGLLMSWVFPLILIFFVG). At 131–717 (RMMFSKMNNK…SSTNNKVDGE (587 aa)) the chain is on the cytoplasmic side. Position 206-213 (206-213 (GPPGTGKT)) interacts with ATP. His427 is a binding site for Zn(2+). Glu428 is a catalytic residue. Zn(2+)-binding residues include His431 and Asp504. The tract at residues 670 to 717 (KLARANNEANNDALDSSKENEEVKSNVNDGATEEKKDDSSTNNKVDGE) is disordered. Basic and acidic residues-rich tracts occupy residues 684-693 (DSSKENEEVK) and 701-717 (TEEK…VDGE).

The protein in the central section; belongs to the AAA ATPase family. In the C-terminal section; belongs to the peptidase M41 family. Homohexamer. Requires Zn(2+) as cofactor.

It localises to the cell membrane. Acts as a processive, ATP-dependent zinc metallopeptidase for both cytoplasmic and membrane proteins. Plays a role in the quality control of integral membrane proteins. This is ATP-dependent zinc metalloprotease FtsH from Clostridium perfringens (strain ATCC 13124 / DSM 756 / JCM 1290 / NCIMB 6125 / NCTC 8237 / Type A).